The chain runs to 65 residues: MMKASELRAKQVEELKSTLMDLHREAFSLRMQKATGQLSHFHRIRAVRRDIARVNMVLAEKGGKV.

The protein belongs to the universal ribosomal protein uL29 family.

The sequence is that of Large ribosomal subunit protein uL29 from Methylococcus capsulatus (strain ATCC 33009 / NCIMB 11132 / Bath).